Here is a 948-residue protein sequence, read N- to C-terminus: Bifunctional glutamine synthetase adenylyltransferase/adenylyl-removing enzyme (948 aa).

The segment at Met-1–Pro-445 is adenylyl removase. The tract at residues Glu-451–Phe-948 is adenylyl transferase.

It belongs to the GlnE family. Mg(2+) is required as a cofactor.

It catalyses the reaction [glutamine synthetase]-O(4)-(5'-adenylyl)-L-tyrosine + phosphate = [glutamine synthetase]-L-tyrosine + ADP. The enzyme catalyses [glutamine synthetase]-L-tyrosine + ATP = [glutamine synthetase]-O(4)-(5'-adenylyl)-L-tyrosine + diphosphate. In terms of biological role, involved in the regulation of glutamine synthetase GlnA, a key enzyme in the process to assimilate ammonia. When cellular nitrogen levels are high, the C-terminal adenylyl transferase (AT) inactivates GlnA by covalent transfer of an adenylyl group from ATP to specific tyrosine residue of GlnA, thus reducing its activity. Conversely, when nitrogen levels are low, the N-terminal adenylyl removase (AR) activates GlnA by removing the adenylyl group by phosphorolysis, increasing its activity. The regulatory region of GlnE binds the signal transduction protein PII (GlnB) which indicates the nitrogen status of the cell. This chain is Bifunctional glutamine synthetase adenylyltransferase/adenylyl-removing enzyme, found in Methylococcus capsulatus (strain ATCC 33009 / NCIMB 11132 / Bath).